We begin with the raw amino-acid sequence, 49 residues long: Large ribosomal subunit protein bL33B (49 aa).

It belongs to the bacterial ribosomal protein bL33 family.

The protein is Large ribosomal subunit protein bL33B of Latilactobacillus sakei subsp. sakei (strain 23K) (Lactobacillus sakei subsp. sakei).